We begin with the raw amino-acid sequence, 434 residues long: ATP-dependent protease ATPase subunit HslU (434 aa).

Residues Val-18, 60–65 (GVGKTE), Asp-247, Glu-312, and Arg-384 each bind ATP.

This sequence belongs to the ClpX chaperone family. HslU subfamily. As to quaternary structure, a double ring-shaped homohexamer of HslV is capped on each side by a ring-shaped HslU homohexamer. The assembly of the HslU/HslV complex is dependent on binding of ATP.

Its subcellular location is the cytoplasm. ATPase subunit of a proteasome-like degradation complex; this subunit has chaperone activity. The binding of ATP and its subsequent hydrolysis by HslU are essential for unfolding of protein substrates subsequently hydrolyzed by HslV. HslU recognizes the N-terminal part of its protein substrates and unfolds these before they are guided to HslV for hydrolysis. The chain is ATP-dependent protease ATPase subunit HslU from Bradyrhizobium sp. (strain ORS 278).